The following is a 2037-amino-acid chain: Protein SWOLLEN 1 (2037 aa).

Disordered regions lie at residues 141–179 (VEPG…VKTD), 454–487 (REGG…NDRD), 504–531 (SVGY…TDKS), 567–637 (KTSS…KDAV), 686–705 (SLPI…DNTA), 837–893 (VGSP…SGGK), 1011–1045 (ATPE…PMIP), 1148–1197 (KHVQ…ESGP), 1729–1748 (SGET…KRPR), 1793–1812 (KSTR…TGLQ), and 1841–2037 (EAST…QSKK). A compositionally biased stretch (basic and acidic residues) spans 147–157 (SHERSLSKEET). Positions 158–176 (VNLQPNPSVDDTPGESSVV) are enriched in polar residues. The span at 454 to 466 (REGGVSKKSDNEG) shows a compositional bias: basic and acidic residues. Positions 504–514 (SVGYVSGGSTS) are enriched in low complexity. The segment covering 515–526 (ELAESESQSDSI) has biased composition (polar residues). Over residues 841-852 (STSSLDKTAAKS) the composition is skewed to low complexity. The span at 853–865 (SKAKSERKPRRTS) shows a compositional bias: basic residues. Composition is skewed to polar residues over residues 1025–1041 (ETPS…SGTN) and 1151–1171 (QSGT…TSTV). A compositionally biased stretch (basic residues) spans 1179 to 1189 (TRVKSRKRKKM). Residues 1794-1805 (STREENKPDPLR) are compositionally biased toward basic and acidic residues. Composition is skewed to polar residues over residues 1874–1886 (KTIS…TISR), 1942–1964 (EEQT…STNK), and 2013–2023 (LQTSMMTSKIP). The span at 2028–2037 (SKSHLSQSKK) shows a compositional bias: basic residues.

In terms of assembly, interacts with importin alpha IMPA1 and IMPA2, required for nuclear-localized proteins import. As to expression, mainly expressed in seedlings, flower buds and stems, and, to a lower extent, in leaves and siliques.

The protein localises to the nucleus. Functionally, under salt stress, appears to prevent the accumulation of reactive oxygen species (ROS) in roots and required for the maintenance of cell wall integrity (cellulose, pectin and lignin composition) by interacting with importin alpha (e.g. IMPA1 and IMPA2) and binding to the promoter of several ROS- and cell wall-related genes to regulate their expression. Necessary for cells organization in meristems and root elongation zones as well as for root elongation in high salinity, but not upon osmotic stress. The protein is Protein SWOLLEN 1 of Arabidopsis thaliana (Mouse-ear cress).